The sequence spans 284 residues: ATP phosphoribosyltransferase (284 aa).

It belongs to the ATP phosphoribosyltransferase family. Long subfamily. It depends on Mg(2+) as a cofactor.

The protein localises to the cytoplasm. It catalyses the reaction 1-(5-phospho-beta-D-ribosyl)-ATP + diphosphate = 5-phospho-alpha-D-ribose 1-diphosphate + ATP. The protein operates within amino-acid biosynthesis; L-histidine biosynthesis; L-histidine from 5-phospho-alpha-D-ribose 1-diphosphate: step 1/9. Its activity is regulated as follows. Feedback inhibited by histidine. Functionally, catalyzes the condensation of ATP and 5-phosphoribose 1-diphosphate to form N'-(5'-phosphoribosyl)-ATP (PR-ATP). Has a crucial role in the pathway because the rate of histidine biosynthesis seems to be controlled primarily by regulation of HisG enzymatic activity. The protein is ATP phosphoribosyltransferase of Corynebacterium kroppenstedtii (strain DSM 44385 / JCM 11950 / CIP 105744 / CCUG 35717).